The chain runs to 1451 residues: MYAVYRQAHPPTAVEFAVYCNFISSQEKNLVVAGTSQLYVYRIIYDVESTSKSEKSSDGKSRKEKLEQVASFSLFGNVMSMASVQLVGTNRDALLLSFKDAKLSVVEYDPGTHDLKTLSLHYFEEPELRDGFVQNVHIPMVRVDPENRCAVMLVYGTCLVVLPFRKDTLADEQEGIVGEGQKSSFLPSYIIDVRELDEKLLNIIDMKFLHGYYEPTLLILFEPNQTWPGRVAVRQDTCSIVAISLNIMQKVHPVIWSLSNLPFDCNQVMAVPKPIGGVVVFAVNSLLYLNQSVPPFGVSLNSLTNGTTAFPLRPQEEVKITLDCSQASFITSDKMVISLKGGEIYVLTLITDGMRSVRAFHFDKAAASVLTTCMMTMEPGYLFLGSRLGNSLLLRYTEKLQETPMEEGKENEEKEKQEEPPNKKKRVDSNWAGCPGKGNLPDELDEIEVYGSEAQSGTQLATYSFEVCDSILNIGPCASASMGEPAFLSEEFQTNPEPDLEVVVCSGYGKNGALSVLQKSIRPQVVTTFELPGCHDMWTVIYCEEKPEKPSAEGDGESPEEEKREPTIEDDKKKHGFLILSREDSTMILQTGQEIMELDTSGFATQGPTVYAGNIGDNKYIIQVSPMGIRLLEGVNQLHFIPVDLGSPIVHCSVADPYVVIMTAEGVVTMFVLKNDSYMGKSHRLALQKPQIHTQSRVITLCAYRDVSGMFTTENKVSFLAKEEIAIRTNSETETIIQDISNTVDDEEEMLYGESNPLTSPNKEESSRGSAAASSAHTGKESGSGRQEPSHWCLLVRENGVMEIYQLPDWRLVFLVKNFPVGQRVLVDSSASQSATQGELKKEEVTRQGDIPLVKEVALVSLGYNHSRPYLLAHVEQELLIYEAFPYDQQQAQSNLKVRFKKMPHNINYREKKVKVRKDKKPEGQGEDTLGVKGRVARFRYFQDISGYSGVFICGPSPHWMLVTSRGAMRLHPMTIDGAIESFSPFHNINCPKGFLYFNKQGELRISVLPTYLSYDAPWPVRKIPLRCTVHYVSYHVESKVYAVCTSVKEPCTRIPRMTGEEKEFETIERDERYIHPQQDKFSIQLISPVSWEAIPNTRVDLEEWEHVTCMKTVALKSQETVSGLKGYVALGTCLMQGEEVTCRGRILILDVIEVVPEPGQPLTKNKFKVLYEKEQKGPVTALCHCSGFLVSAIGQKIFLWSLKDNDLTGMAFIDTQLYIHQMYSIKNFILAADVMKSISLLRYQPESKTLSLVSRDAKPLEVYSIEFMVDNNQLGFLVSDRDKNLMVYMYLPEAKESFGGMRLLRRADFNVGSHVNAFWRMPCRGTLDTANKKALTWDNKHITWFATLDGGVGLLLPMQEKTYRRLLMLQNALTTMLPHHAGLNPKAFRMLHCDRRTLQNAVKNILDGELLNKYLYLSTMERSELAKKIGTTPDIILDDLLEIERVTAHF.

Basic and acidic residues-rich tracts occupy residues 401-422 (QETPMEEGKENEEKEKQEEPPN) and 561-572 (EEKREPTIEDDK). 3 disordered regions span residues 401–432 (QETPMEEGKENEEKEKQEEPPNKKKRVDSNWA), 548–572 (EKPSAEGDGESPEEEKREPTIEDDK), and 753–789 (GESNPLTSPNKEESSRGSAAASSAHTGKESGSGRQEP). The Nuclear localization signal motif lies at 901–916 (KKMPHNINYREKKVKV).

Belongs to the CPSF1 family.

Its subcellular location is the nucleus. The protein localises to the nucleoplasm. Component of the cleavage and polyadenylation specificity factor (CPSF) complex that plays a key role in pre-mRNA 3'-end formation, recognizing the AAUAAA signal sequence and interacting with poly(A) polymerase and other factors to bring about cleavage and poly(A) addition. This subunit is involved in the RNA recognition step of the polyadenylation reaction. Plays a role in eye morphogenesis and the development of retinal ganglion cell projections to the tectum. This Danio rerio (Zebrafish) protein is Cleavage and polyadenylation specificity factor subunit 1 (cpsf1).